A 505-amino-acid polypeptide reads, in one-letter code: Lysine--tRNA ligase (505 aa).

Mg(2+) is bound by residues Glu-415 and Glu-422.

This sequence belongs to the class-II aminoacyl-tRNA synthetase family. As to quaternary structure, homodimer. Requires Mg(2+) as cofactor.

The protein localises to the cytoplasm. It catalyses the reaction tRNA(Lys) + L-lysine + ATP = L-lysyl-tRNA(Lys) + AMP + diphosphate. The chain is Lysine--tRNA ligase from Escherichia coli O157:H7.